The chain runs to 272 residues: Ribosomal RNA small subunit methyltransferase A (272 aa).

Residues asparagine 18, leucine 20, glycine 45, glutamate 66, aspartate 91, and asparagine 113 each contribute to the S-adenosyl-L-methionine site.

It belongs to the class I-like SAM-binding methyltransferase superfamily. rRNA adenine N(6)-methyltransferase family. RsmA subfamily.

It localises to the cytoplasm. It carries out the reaction adenosine(1518)/adenosine(1519) in 16S rRNA + 4 S-adenosyl-L-methionine = N(6)-dimethyladenosine(1518)/N(6)-dimethyladenosine(1519) in 16S rRNA + 4 S-adenosyl-L-homocysteine + 4 H(+). Its function is as follows. Specifically dimethylates two adjacent adenosines (A1518 and A1519) in the loop of a conserved hairpin near the 3'-end of 16S rRNA in the 30S particle. May play a critical role in biogenesis of 30S subunits. In Yersinia pseudotuberculosis serotype O:1b (strain IP 31758), this protein is Ribosomal RNA small subunit methyltransferase A.